The sequence spans 506 residues: Maturase K (506 aa).

It belongs to the intron maturase 2 family. MatK subfamily.

Its subcellular location is the plastid. It localises to the chloroplast. Its function is as follows. Usually encoded in the trnK tRNA gene intron. Probably assists in splicing its own and other chloroplast group II introns. This chain is Maturase K, found in Mimosa pudica (Sensitive plant).